The primary structure comprises 345 residues: Achaete-scute complex protein T4 (345 aa).

Residues 78–92 (SESVSSLSPGSSPAP) show a composition bias toward low complexity. The tract at residues 78 to 109 (SESVSSLSPGSSPAPYNVDQSQSVQRRNARER) is disordered. Positions 99–162 (QSVQRRNARE…RIAVEYIRRL (64 aa)) constitute a bHLH domain.

As to quaternary structure, efficient DNA binding requires dimerization with another bHLH protein. Interacts with da (via bHLH motif). Interacts with Bap60. As to expression, l(1)SC, SC and AC strongly label the presumptive stomatogastric nervous system, while ASE is more prominent in the presumptive procephalic lobe. Associates with the somatic nuclei through nuclear cycles 9 and 10. During nuclear cycle 11 distributes uniformly in the embryo.

Its function is as follows. AS-C proteins are involved in the determination of the neuronal precursors in the peripheral nervous system and the central nervous system. Also involved in sex determination and dosage compensation. The chain is Achaete-scute complex protein T4 (sc) from Drosophila melanogaster (Fruit fly).